A 96-amino-acid polypeptide reads, in one-letter code: Small ubiquitin-related modifier 2 (96 aa).

A Glycyl lysine isopeptide (Lys-Gly) (interchain with G-Cter in SUMO) cross-link involves residue Lys-11. The region spanning 16 to 96 (DHINLKVAGQ…FQQQTGGHRI (81 aa)) is the Ubiquitin-like domain. Gly-93 is covalently cross-linked (Glycyl lysine isopeptide (Gly-Lys) (interchain with K-? in acceptor proteins)). The propeptide occupies 94 to 96 (HRI).

This sequence belongs to the ubiquitin family. SUMO subfamily. As to quaternary structure, interacts with sae2 and ube2i. Covalently attached to a number of proteins. Post-translationally, polymeric chains can be formed through Lys-11 cross-linking. In terms of processing, cleavage of precursor form by a sentrin-specific protease is necessary for function.

The protein localises to the nucleus. Functionally, ubiquitin-like protein that can be covalently attached to proteins as a monomer or as a lysine-linked polymer. Covalent attachment via an isopeptide bond to its substrates requires prior activation by the E1 complex sae1-sae2 and linkage to the E2 enzyme ube2i, and can be promoted by an E3 ligase such as pias1-4. This post-translational modification on lysine residues of proteins plays a crucial role in a number of cellular processes such as nuclear transport, DNA replication and repair, mitosis and signal transduction. Polymeric sumo2 chains are also susceptible to polyubiquitination which functions as a signal for proteasomal degradation of modified proteins. In Danio rerio (Zebrafish), this protein is Small ubiquitin-related modifier 2.